We begin with the raw amino-acid sequence, 266 residues long: Cell division cycle-associated protein 3 (266 aa).

A disordered region spans residues 1–84 (MGSTQSVSGT…TPMKISGPDP (84 aa)). Phosphoserine occurs at positions 29 and 31. Residues 32 to 46 (AGIQRTPIQVESSPQ) are compositionally biased toward polar residues. T37 carries the post-translational modification Phosphothreonine. 2 positions are modified to phosphoserine: S44 and S67. Residue T75 is modified to Phosphothreonine. The tract at residues 90 to 119 (KELSEVLETEASESISSPELALPRETPLFY) is F-box-like. The residue at position 93 (S93) is a Phosphoserine. Disordered regions lie at residues 120 to 225 (DLDL…LSEN) and 242 to 266 (KAGG…LLES). Over residues 143 to 156 (LDPKQVFTKEEAKQ) the composition is skewed to basic and acidic residues. Residues 157–168 (SAETIAASQNSD) show a composition bias toward polar residues. S197 carries the post-translational modification Phosphoserine. Residue T200 is modified to Phosphothreonine. The span at 203-213 (QDDNSPGTLTL) shows a compositional bias: polar residues. S207 is modified (phosphoserine). T210 is modified (phosphothreonine). A compositionally biased stretch (basic and acidic residues) spans 250 to 259 (PNQDHDKENQ). A KEN box motif is present at residues 256 to 258 (KEN).

Interacts with SKP1. Part of a SCF (SKP1-cullin-F-box) protein ligase complex. Ubiquitinated and degraded by the APC/C-Cdh1 complex.

The protein localises to the cytoplasm. The protein resides in the cytosol. It participates in protein modification; protein ubiquitination. Functionally, F-box-like protein which is required for entry into mitosis. Acts by participating in E3 ligase complexes that mediate the ubiquitination and degradation of WEE1 kinase at G2/M phase. The chain is Cell division cycle-associated protein 3 (Cdca3) from Mus musculus (Mouse).